Consider the following 284-residue polypeptide: Proteasome subunit pbs-5 (284 aa).

Residues Met1 to Gly64 constitute a propeptide, removed in mature form. The Nucleophile role is filled by Thr65.

It belongs to the peptidase T1B family. In terms of assembly, the 26S proteasome consists of a 20S proteasome core and two 19S regulatory subunits. The 20S proteasome core is composed of 28 subunits that are arranged in four stacked rings, resulting in a barrel-shaped structure. The two end rings are each formed by seven alpha subunits, and the two central rings are each formed by seven beta subunits. The catalytic chamber with the active sites is on the inside of the barrel.

Its subcellular location is the cytoplasm. The protein resides in the nucleus. It carries out the reaction Cleavage of peptide bonds with very broad specificity.. In terms of biological role, component of the 20S core proteasome complex involved in the proteolytic degradation of most intracellular proteins. This complex plays numerous essential roles within the cell by associating with different regulatory particles. Associated with two 19S regulatory particles, forms the 26S proteasome and thus participates in the ATP-dependent degradation of ubiquitinated proteins. The 26S proteasome plays a key role in the maintenance of protein homeostasis by removing misfolded or damaged proteins that could impair cellular functions, and by removing proteins whose functions are no longer required. The chain is Proteasome subunit pbs-5 from Caenorhabditis elegans.